Consider the following 392-residue polypeptide: Cobalt-precorrin-5B C(1)-methyltransferase (392 aa).

This sequence belongs to the CbiD family.

The enzyme catalyses Co-precorrin-5B + S-adenosyl-L-methionine = Co-precorrin-6A + S-adenosyl-L-homocysteine. It participates in cofactor biosynthesis; adenosylcobalamin biosynthesis; cob(II)yrinate a,c-diamide from sirohydrochlorin (anaerobic route): step 6/10. Functionally, catalyzes the methylation of C-1 in cobalt-precorrin-5B to form cobalt-precorrin-6A. This is Cobalt-precorrin-5B C(1)-methyltransferase from Pelobacter propionicus (strain DSM 2379 / NBRC 103807 / OttBd1).